Reading from the N-terminus, the 563-residue chain is Protein NRT1/ PTR FAMILY 5.9 (563 aa).

Residues 56–76 (TWAGFTSMLPLFSAPLADTYW) traverse the membrane as a helical segment. The residue at position 81 (threonine 81) is a Phosphothreonine. 10 helical membrane-spanning segments follow: residues 82–102 (ILAS…TAFA), 110–130 (TISS…LGVL), 168–188 (FFQL…TVMA), 194–214 (FGWV…ILVF), 317–337 (FPIW…ATFF), 362–382 (TITL…IPIT), 394–414 (VMER…IAAI), 441–461 (IFWL…TVVG), 479–499 (FALY…LISI), and 528–548 (WLLA…CKFF).

The protein belongs to the major facilitator superfamily. Proton-dependent oligopeptide transporter (POT/PTR) (TC 2.A.17) family. In terms of tissue distribution, expressed in roots and flowers.

The protein resides in the membrane. The protein is Protein NRT1/ PTR FAMILY 5.9 (NPF5.9) of Arabidopsis thaliana (Mouse-ear cress).